We begin with the raw amino-acid sequence, 121 residues long: Natriuretic peptides B (121 aa).

The signal sequence occupies residues 1–26; that stretch reads MDLQKVLPQMILLLLFLNLSPLGGHS. An intrachain disulfide couples Cys99 to Cys115.

The protein belongs to the natriuretic peptide family. In terms of processing, the precursor molecule is proteolytically cleaved by the endoprotease Furin to produce brain natriuretic peptide 45. May undergo further proteolytic cleavage by various proteases such as DPP4, MME and possibly FAP, to give rise to a variety of shorter peptides. May be cleaved at Ser-91 by the prolyl endopeptidase FAP (seprase) activity (in vitro). May be degraded by IDE. During IDE degradation, the resulting products initially increase the activation of NPR1 and can also stimulate NPR2 to produce cGMP before the fragments are completely degraded and inactivated by IDE (in vitro). Expressed in the atria and ventricles, but at much lower levels than NPPA. Expression levels in the ventricles are slightly higher than in the atria. Very low levels of expression detected in the brain, hypothalamus, lung and aorta. In terms of tissue distribution, atria (at protein level). Cardiocytes (at protein level).

It localises to the secreted. Its function is as follows. Cardiac hormone that plays a key role in mediating cardio-renal homeostasis. May also function as a paracrine antifibrotic factor in the heart. Acts by specifically binding and stimulating NPR1 to produce cGMP, which in turn activates effector proteins that drive various biological responses. Likely involved in regulating the extracellular fluid volume and maintaining the fluid-electrolyte balance through natriuresis, diuresis, kaluresis and chloruresis. The sequence is that of Natriuretic peptides B (Nppb) from Rattus norvegicus (Rat).